A 308-amino-acid polypeptide reads, in one-letter code: Protoheme IX farnesyltransferase (308 aa).

8 helical membrane passes run 20 to 40 (LLAY…VTAI), 50 to 70 (AIHP…AAGA), 102 to 122 (NALA…WCAT), 124 to 144 (LLAG…YTLW), 149 to 169 (TSQN…IGWS), 170 to 190 (AITG…FFWT), 227 to 249 (LIYT…WLYG), and 288 to 308 (YLAV…PTLH).

Belongs to the UbiA prenyltransferase family. Protoheme IX farnesyltransferase subfamily.

The protein localises to the cell membrane. The catalysed reaction is heme b + (2E,6E)-farnesyl diphosphate + H2O = Fe(II)-heme o + diphosphate. The protein operates within porphyrin-containing compound metabolism; heme O biosynthesis; heme O from protoheme: step 1/1. In terms of biological role, converts heme B (protoheme IX) to heme O by substitution of the vinyl group on carbon 2 of heme B porphyrin ring with a hydroxyethyl farnesyl side group. In Mycobacterium tuberculosis (strain ATCC 25618 / H37Rv), this protein is Protoheme IX farnesyltransferase.